Here is a 342-residue protein sequence, read N- to C-terminus: Ribosomal RNA small subunit methyltransferase H (342 aa).

S-adenosyl-L-methionine contacts are provided by residues 36 to 38, Asp-56, Phe-82, Asp-100, and Gln-107; that span reads GGH. The tract at residues 309–342 is disordered; the sequence is ENRESGMGKGHGAAASRFPTPDSRFPTSPNGDAP. A compositionally biased stretch (polar residues) spans 333 to 342; the sequence is FPTSPNGDAP.

Belongs to the methyltransferase superfamily. RsmH family.

It localises to the cytoplasm. It catalyses the reaction cytidine(1402) in 16S rRNA + S-adenosyl-L-methionine = N(4)-methylcytidine(1402) in 16S rRNA + S-adenosyl-L-homocysteine + H(+). In terms of biological role, specifically methylates the N4 position of cytidine in position 1402 (C1402) of 16S rRNA. This chain is Ribosomal RNA small subunit methyltransferase H, found in Xanthomonas campestris pv. campestris (strain B100).